The following is an 887-amino-acid chain: Alanine--tRNA ligase (887 aa).

Residues His-564, His-568, Cys-675, and His-679 each contribute to the Zn(2+) site. Positions 851–866 (GQGGGGRPDMAQGGGP) are enriched in gly residues. The segment at 851 to 871 (GQGGGGRPDMAQGGGPDGDKA) is disordered.

It belongs to the class-II aminoacyl-tRNA synthetase family. Requires Zn(2+) as cofactor.

The protein resides in the cytoplasm. It carries out the reaction tRNA(Ala) + L-alanine + ATP = L-alanyl-tRNA(Ala) + AMP + diphosphate. Its function is as follows. Catalyzes the attachment of alanine to tRNA(Ala) in a two-step reaction: alanine is first activated by ATP to form Ala-AMP and then transferred to the acceptor end of tRNA(Ala). Also edits incorrectly charged Ser-tRNA(Ala) and Gly-tRNA(Ala) via its editing domain. The polypeptide is Alanine--tRNA ligase (Rhizorhabdus wittichii (strain DSM 6014 / CCUG 31198 / JCM 15750 / NBRC 105917 / EY 4224 / RW1) (Sphingomonas wittichii)).